The chain runs to 414 residues: Glutamyl-tRNA reductase (414 aa).

Substrate-binding positions include 49–52 (TCNR), Ser-108, 113–115 (EPQ), and Gln-119. The Nucleophile role is filled by Cys-50. 188–193 (GAGQTG) lines the NADP(+) pocket.

Belongs to the glutamyl-tRNA reductase family. Homodimer.

The enzyme catalyses (S)-4-amino-5-oxopentanoate + tRNA(Glu) + NADP(+) = L-glutamyl-tRNA(Glu) + NADPH + H(+). The protein operates within porphyrin-containing compound metabolism; protoporphyrin-IX biosynthesis; 5-aminolevulinate from L-glutamyl-tRNA(Glu): step 1/2. In terms of biological role, catalyzes the NADPH-dependent reduction of glutamyl-tRNA(Glu) to glutamate 1-semialdehyde (GSA). This Francisella tularensis subsp. novicida (strain U112) protein is Glutamyl-tRNA reductase.